We begin with the raw amino-acid sequence, 421 residues long: Phosphatidylinositol 5-phosphate 4-kinase type-2 gamma (421 aa).

At Ala2 the chain carries N-acetylalanine. Residue Ser26 is modified to Phosphoserine. The 378-residue stretch at 43 to 420 (AADPLVGVFL…RFLDFITNIF (378 aa)) folds into the PIPK domain. A required for interaction with PIP5K1A region spans residues 69-75 (VMLLPDD). Ser349 carries the post-translational modification Phosphoserine.

Interacts with PIP5K1A; the interaction inhibits PIP5K1A kinase activity. In terms of processing, phosphorylated, phosphorylation is induced by EGF.

The protein localises to the endoplasmic reticulum. Its subcellular location is the cytoplasm. The catalysed reaction is a 1,2-diacyl-sn-glycero-3-phospho-(1D-myo-inositol-5-phosphate) + ATP = a 1,2-diacyl-sn-glycero-3-phospho-(1D-myo-inositol-4,5-bisphosphate) + ADP + H(+). It catalyses the reaction 1,2-dihexadecanoyl-sn-glycero-3-phospho-(1D-myo-inositol-5-phosphate) + ATP = 1,2-dihexadecanoyl-sn-glycero-3-phospho-(1D-myo-inositol-4,5-bisphosphate) + ADP + H(+). It carries out the reaction 1,2-dihexadecanoyl-sn-glycero-3-phospho-(1D-myo-inositol-5-phosphate) + GTP = 1,2-dihexadecanoyl-sn-glycero-3-phospho-(1D-myo-inositol-4,5-bisphosphate) + GDP + H(+). Phosphatidylinositol 5-phosphate 4-kinase with low enzymatic activity. May be a GTP sensor, has higher GTP-dependent kinase activity than ATP-dependent kinase activity. PIP4Ks negatively regulate insulin signaling through a catalytic-independent mechanism. They interact with PIP5Ks and suppress PIP5K-mediated PtdIns(4,5)P2 synthesis and insulin-dependent conversion to PtdIns(3,4,5)P3. The sequence is that of Phosphatidylinositol 5-phosphate 4-kinase type-2 gamma (PIP4K2C) from Pongo abelii (Sumatran orangutan).